Consider the following 203-residue polypeptide: N-(5'-phosphoribosyl)anthranilate isomerase (203 aa).

It belongs to the TrpF family.

It catalyses the reaction N-(5-phospho-beta-D-ribosyl)anthranilate = 1-(2-carboxyphenylamino)-1-deoxy-D-ribulose 5-phosphate. It participates in amino-acid biosynthesis; L-tryptophan biosynthesis; L-tryptophan from chorismate: step 3/5. The sequence is that of N-(5'-phosphoribosyl)anthranilate isomerase from Caldanaerobacter subterraneus subsp. tengcongensis (strain DSM 15242 / JCM 11007 / NBRC 100824 / MB4) (Thermoanaerobacter tengcongensis).